A 421-amino-acid chain; its full sequence is Gamma-glutamyl phosphate reductase (421 aa).

The protein belongs to the gamma-glutamyl phosphate reductase family.

The protein resides in the cytoplasm. It catalyses the reaction L-glutamate 5-semialdehyde + phosphate + NADP(+) = L-glutamyl 5-phosphate + NADPH + H(+). It participates in amino-acid biosynthesis; L-proline biosynthesis; L-glutamate 5-semialdehyde from L-glutamate: step 2/2. Catalyzes the NADPH-dependent reduction of L-glutamate 5-phosphate into L-glutamate 5-semialdehyde and phosphate. The product spontaneously undergoes cyclization to form 1-pyrroline-5-carboxylate. The sequence is that of Gamma-glutamyl phosphate reductase from Shewanella pealeana (strain ATCC 700345 / ANG-SQ1).